Here is a 136-residue protein sequence, read N- to C-terminus: Large ribosomal subunit protein uL16 (136 aa).

The protein belongs to the universal ribosomal protein uL16 family. Part of the 50S ribosomal subunit.

Binds 23S rRNA and is also seen to make contacts with the A and possibly P site tRNAs. The sequence is that of Large ribosomal subunit protein uL16 from Pasteurella multocida (strain Pm70).